The primary structure comprises 494 residues: Glutamyl-tRNA(Gln) amidotransferase subunit A (494 aa).

Residues K78 and S158 each act as charge relay system in the active site. S182 functions as the Acyl-ester intermediate in the catalytic mechanism.

The protein belongs to the amidase family. GatA subfamily. As to quaternary structure, heterotrimer of A, B and C subunits.

It carries out the reaction L-glutamyl-tRNA(Gln) + L-glutamine + ATP + H2O = L-glutaminyl-tRNA(Gln) + L-glutamate + ADP + phosphate + H(+). Functionally, allows the formation of correctly charged Gln-tRNA(Gln) through the transamidation of misacylated Glu-tRNA(Gln) in organisms which lack glutaminyl-tRNA synthetase. The reaction takes place in the presence of glutamine and ATP through an activated gamma-phospho-Glu-tRNA(Gln). The polypeptide is Glutamyl-tRNA(Gln) amidotransferase subunit A (Jannaschia sp. (strain CCS1)).